The sequence spans 245 residues: 1-(5-phosphoribosyl)-5-[(5-phosphoribosylamino)methylideneamino] imidazole-4-carboxamide isomerase (245 aa).

Residue Asp-7 is the Proton acceptor of the active site. Asp-129 serves as the catalytic Proton donor.

It belongs to the HisA/HisF family.

It is found in the cytoplasm. The enzyme catalyses 1-(5-phospho-beta-D-ribosyl)-5-[(5-phospho-beta-D-ribosylamino)methylideneamino]imidazole-4-carboxamide = 5-[(5-phospho-1-deoxy-D-ribulos-1-ylimino)methylamino]-1-(5-phospho-beta-D-ribosyl)imidazole-4-carboxamide. The protein operates within amino-acid biosynthesis; L-histidine biosynthesis; L-histidine from 5-phospho-alpha-D-ribose 1-diphosphate: step 4/9. The polypeptide is 1-(5-phosphoribosyl)-5-[(5-phosphoribosylamino)methylideneamino] imidazole-4-carboxamide isomerase (Buchnera aphidicola subsp. Cinara cedri (strain Cc)).